A 130-amino-acid chain; its full sequence is Small ribosomal subunit protein uS9 (130 aa).

The segment at 105–130 (TRDARMKERKKPGLKKARKASQFSKR) is disordered. Positions 111–130 (KERKKPGLKKARKASQFSKR) are enriched in basic residues.

It belongs to the universal ribosomal protein uS9 family.

The polypeptide is Small ribosomal subunit protein uS9 (Lactiplantibacillus plantarum (strain ATCC BAA-793 / NCIMB 8826 / WCFS1) (Lactobacillus plantarum)).